The following is a 216-amino-acid chain: ATP phosphoribosyltransferase (216 aa).

The protein belongs to the ATP phosphoribosyltransferase family. Short subfamily. In terms of assembly, heteromultimer composed of HisG and HisZ subunits.

The protein localises to the cytoplasm. The enzyme catalyses 1-(5-phospho-beta-D-ribosyl)-ATP + diphosphate = 5-phospho-alpha-D-ribose 1-diphosphate + ATP. It participates in amino-acid biosynthesis; L-histidine biosynthesis; L-histidine from 5-phospho-alpha-D-ribose 1-diphosphate: step 1/9. Functionally, catalyzes the condensation of ATP and 5-phosphoribose 1-diphosphate to form N'-(5'-phosphoribosyl)-ATP (PR-ATP). Has a crucial role in the pathway because the rate of histidine biosynthesis seems to be controlled primarily by regulation of HisG enzymatic activity. The polypeptide is ATP phosphoribosyltransferase (Nitrosomonas eutropha (strain DSM 101675 / C91 / Nm57)).